A 240-amino-acid chain; its full sequence is Uridylate kinase (240 aa).

ATP is bound at residue 13–16; it reads KISG. G55 is a UMP binding site. G56 and R60 together coordinate ATP. UMP-binding positions include D75 and 136 to 143; that span reads TGNPFFTT. Residues T163, Q164, Y169, and D172 each coordinate ATP.

It belongs to the UMP kinase family. Homohexamer.

It localises to the cytoplasm. It carries out the reaction UMP + ATP = UDP + ADP. Its pathway is pyrimidine metabolism; CTP biosynthesis via de novo pathway; UDP from UMP (UMPK route): step 1/1. Its activity is regulated as follows. Inhibited by UTP. Functionally, catalyzes the reversible phosphorylation of UMP to UDP. This is Uridylate kinase from Paramagnetospirillum magneticum (strain ATCC 700264 / AMB-1) (Magnetospirillum magneticum).